A 293-amino-acid polypeptide reads, in one-letter code: MRPLMRNRASERGVDPAPSRWAWRMQRLLLTPAFLLFLRAGVPVLVLFGAATWWLSDTDRRAAIWETVAEARASFETRPEFMVQLMAVDGATDALAAEIRKEVPLDFPLSSFDLNLSDMRDRIVALDPVKSATVRIRPGGVLHIDVEPRIPVVIWRNPQGLTAVDVNGIHVGPIAQRMDRPDLPLIAGTGATEHVKEALNLYRAAGPLGTRLRGIVRVGERRWDIVLDRDQRIMLPKEGPVEALDRVIALDTAQDILSRDVNRVDLRLGARPTVKMSDYATNVWWEIRQVSRQ.

Over 1-27 the chain is Cytoplasmic; sequence MRPLMRNRASERGVDPAPSRWAWRMQR. A helical membrane pass occupies residues 28-48; that stretch reads LLLTPAFLLFLRAGVPVLVLF. The Periplasmic segment spans residues 49–293; sequence GAATWWLSDT…WWEIRQVSRQ (245 aa). One can recognise a POTRA domain in the interval 81–149; that stretch reads FMVQLMAVDG…GVLHIDVEPR (69 aa).

Belongs to the FtsQ/DivIB family. FtsQ subfamily.

It localises to the cell inner membrane. Functionally, essential cell division protein. This is Cell division protein FtsQ from Roseobacter litoralis (strain ATCC 49566 / DSM 6996 / JCM 21268 / NBRC 15278 / OCh 149).